A 638-amino-acid polypeptide reads, in one-letter code: Methylmalonyl-CoA mutase small subunit (638 aa).

Polar residues predominate over residues 1–11 (MSSTDQGTNPA). Residues 1–34 (MSSTDQGTNPADTDDLTPTTLSLAGDFPKATEEQ) form a disordered region.

It belongs to the methylmalonyl-CoA mutase family. As to quaternary structure, heterodimer of an alpha and a beta chain. It depends on adenosylcob(III)alamin as a cofactor.

It carries out the reaction (R)-methylmalonyl-CoA = succinyl-CoA. The protein operates within metabolic intermediate metabolism; propanoyl-CoA degradation; succinyl-CoA from propanoyl-CoA: step 3/3. Its function is as follows. Catalyzes the isomerization of succinyl-CoA to methylmalonyl-CoA during synthesis of propionate from tricarboxylic acid-cycle intermediates. The chain is Methylmalonyl-CoA mutase small subunit (mutA) from Propionibacterium freudenreichii subsp. shermanii.